The chain runs to 439 residues: MSRHFRTHTTSRLTFPSSSGGLAITRLPFSSTSSKLLLQQLSSTSPAAAATAVTITTSSPARNLQRARASAAEQGMEEHGKAAVGWAARDDSGVLSPYNFSRRAQKDDDVTIKVLYCGICHTDLHIVKNDWGNAMYPVVPGHEIVGVVTGVGAGVTKFKAGDTVGVGYFVASCRGCECCGNGYENYCAKMVTTCNGVDHDHGGGAATQGGFSDAIVVNEHYVLRVPAGLPLDSAAPLLCAGVTVYSPMVIHGLNAPGKHVGVVGLGGLGHVAVKFAKAFGMRVTVISTSPGKRQEALEHLGADEFLVSRDAGQMAAAAATMDGILNTVSAWHPIAPLFSLMKPMAQMVFVGGPTRPLELPAYAIVPGGKGITGNCVGGIRDCQAMLDFAGEHGITAEVEVIKMDYVNTAMERLEKNDVRYRFVIDVAGSSLAGSGDAKI.

Residue Cys-120 coordinates Zn(2+). Thr-122 is a binding site for NADP(+). His-142, Glu-143, Cys-173, Cys-176, Cys-179, Cys-187, and Cys-239 together coordinate Zn(2+). Residues Thr-243, 264-269 (GLGGLG), 287-292 (STSPGK), Thr-327, Gly-351, and 374-376 (NCV) contribute to the NADP(+) site.

This sequence belongs to the zinc-containing alcohol dehydrogenase family. As to quaternary structure, homodimer. It depends on Zn(2+) as a cofactor.

The catalysed reaction is (E)-cinnamyl alcohol + NADP(+) = (E)-cinnamaldehyde + NADPH + H(+). The enzyme catalyses (E)-coniferol + NADP(+) = (E)-coniferaldehyde + NADPH + H(+). It catalyses the reaction (E)-sinapyl alcohol + NADP(+) = (E)-sinapaldehyde + NADPH + H(+). It carries out the reaction (E)-4-coumaroyl alcohol + NADP(+) = (E)-4-coumaraldehyde + NADPH + H(+). The catalysed reaction is (E)-caffeyl alcohol + NADP(+) = (E)-caffeyl aldehyde + NADPH + H(+). It functions in the pathway aromatic compound metabolism; phenylpropanoid biosynthesis. Its function is as follows. Involved in lignin biosynthesis. Catalyzes the final step specific for the production of lignin monomers. Catalyzes the NADPH-dependent reduction of coniferaldehyde, 5-hydroxyconiferaldehyde, sinapaldehyde, 4-coumaraldehyde and caffeyl aldehyde to their respective alcohols. This chain is Probable cinnamyl alcohol dehydrogenase 8C, found in Oryza sativa subsp. japonica (Rice).